We begin with the raw amino-acid sequence, 141 residues long: Mu-like prophage FluMu protein gp36 (141 aa).

The protein to phage Mu protein gp36.

The sequence is that of Mu-like prophage FluMu protein gp36 from Haemophilus influenzae (strain ATCC 51907 / DSM 11121 / KW20 / Rd).